The sequence spans 357 residues: Protein phosphatase 1 regulatory subunit 42 (357 aa).

7 LRR repeats span residues 29 to 50, 51 to 72, 73 to 94, 95 to 116, 117 to 138, 147 to 168, and 169 to 190; these read KITHINFSDKNIDAIEDLSLCK, NLSVLYLYDNCISQITNLNYAT, NLTHLYLQNNCIPCIENLRSLK, KLEKLYLGGNYIAVIEGLEGLG, ELRELHVENQRLPLGEKLLFDP, SLSILNISNNNIDDIRDLEILE, and NLNQLIAVDNQLLHVKDLEFLL. Residues 204–242 form the LRRCT domain; sequence NPVCLKPKYRDRLILVSKSLEFLDGKEIKNIERQFLMNW.

As to quaternary structure, interacts with PPP1CC isoform gamma-2; the interaction is direct. Interacts with actin, dynein, KIF5B, KIFC1 and tubulin. Associates with microtubules. Phosphorylated; in the testis.

The protein localises to the cytoplasm. It localises to the cytoskeleton. It is found in the microtubule organizing center. Its subcellular location is the centrosome. In terms of biological role, regulates phosphatase activity of protein phosphatase 1 (PP1) complexes in the testis. This is Protein phosphatase 1 regulatory subunit 42 (PPP1R42) from Macaca fascicularis (Crab-eating macaque).